Here is a 710-residue protein sequence, read N- to C-terminus: NAD(P)H-quinone oxidoreductase subunit 5, chloroplastic (710 aa).

The next 17 helical transmembrane spans lie at 9 to 29, 40 to 60, 89 to 109, 125 to 145, 147 to 167, 185 to 205, 221 to 241, 258 to 278, 280 to 300, 327 to 347, 354 to 374, 396 to 416, 425 to 445, 519 to 539, 571 to 591, 657 to 676, and 689 to 709; these read WIIP…LLIF, WSFQ…YLSI, IDPL…LVLI, FTYM…SNFI, IYIF…FWFT, GDFG…SFEF, VNLL…IAKS, TPIS…FLVA, LLPL…IGII, LGYM…FHLI, ALLF…IGYS, GAFL…CFWS, WLYS…TAFY, MLFP…LGIP, FLKH…IAFL, SFDL…LSFI, and IPFY…LFYK.

This sequence belongs to the complex I subunit 5 family. In terms of assembly, NDH is composed of at least 16 different subunits, 5 of which are encoded in the nucleus.

The protein resides in the plastid. Its subcellular location is the chloroplast thylakoid membrane. It carries out the reaction a plastoquinone + NADH + (n+1) H(+)(in) = a plastoquinol + NAD(+) + n H(+)(out). The enzyme catalyses a plastoquinone + NADPH + (n+1) H(+)(in) = a plastoquinol + NADP(+) + n H(+)(out). Its function is as follows. NDH shuttles electrons from NAD(P)H:plastoquinone, via FMN and iron-sulfur (Fe-S) centers, to quinones in the photosynthetic chain and possibly in a chloroplast respiratory chain. The immediate electron acceptor for the enzyme in this species is believed to be plastoquinone. Couples the redox reaction to proton translocation, and thus conserves the redox energy in a proton gradient. The protein is NAD(P)H-quinone oxidoreductase subunit 5, chloroplastic (ndhF) of Ipomoea purpurea (Common morning glory).